The chain runs to 66 residues: Cold shock protein CspB (66 aa).

Residues 4–63 (GKVKWFNNEKGYGFIEVEGGSDVFVHFTAIQGEGFKTLEEGQEVSFEIVQGNRGPQAANV) enclose the CSD domain.

In terms of assembly, homodimer.

The protein resides in the cytoplasm. Functionally, affects cell viability at low temperatures. This is Cold shock protein CspB (cspB) from Bacillus caldolyticus.